A 580-amino-acid polypeptide reads, in one-letter code: Glutathione hydrolase proenzyme (580 aa).

An N-terminal signal peptide occupies residues 1-25 (MIKPTFLRRVAIAALLSGSCFSAAA). Arg-114 provides a ligand contact to L-glutamate. Thr-391 functions as the Nucleophile in the catalytic mechanism. Residues Thr-409, Asn-411, Gln-430, Asp-433, 462-463 (SS), and 483-484 (GG) each bind L-glutamate. Residues 561–580 (DGELYGASDPRSVDDLTAGY) are disordered.

The protein belongs to the gamma-glutamyltransferase family. This enzyme consists of two polypeptide chains, which are synthesized in precursor form from a single polypeptide. Cleaved by autocatalysis into a large and a small subunit.

It localises to the periplasm. It catalyses the reaction an N-terminal (5-L-glutamyl)-[peptide] + an alpha-amino acid = 5-L-glutamyl amino acid + an N-terminal L-alpha-aminoacyl-[peptide]. The catalysed reaction is glutathione + H2O = L-cysteinylglycine + L-glutamate. The enzyme catalyses an S-substituted glutathione + H2O = an S-substituted L-cysteinylglycine + L-glutamate. It participates in sulfur metabolism; glutathione metabolism. With respect to regulation, transferase and hydrolase activities are inhibited by L-Ala and L-Gln, and also by GGT affinity labeling reagents such as azaserine and 6-diazo-5-oxo-nor-leucine. Its function is as follows. Cleaves the gamma-glutamyl bond of periplasmic glutathione (gamma-Glu-Cys-Gly), glutathione conjugates, and other gamma-glutamyl compounds. The metabolism of glutathione releases free glutamate and the dipeptide cysteinyl-glycine, which is hydrolyzed to cysteine and glycine by dipeptidases; it may function in amino acid uptake/salvage, or possibly in peptidoglycan linkage. Catalyzes the hydrolysis and transpeptidation of many gamma-glutamyl compounds (including some D-gamma-glutamyl substrates), with a preference for basic and aromatic amino acids as acceptors. The KM values for gamma-glutamyl acceptors are so high that it has been proposed transpeptidation is not the physiological role in E.coli. The polypeptide is Glutathione hydrolase proenzyme (ggt) (Escherichia coli (strain K12)).